Here is a 479-residue protein sequence, read N- to C-terminus: Ribosomal RNA small subunit methyltransferase F (479 aa).

S-adenosyl-L-methionine-binding positions include 125 to 131 (AAAPGSK), glutamate 149, aspartate 176, and aspartate 194. Catalysis depends on cysteine 247, which acts as the Nucleophile.

This sequence belongs to the class I-like SAM-binding methyltransferase superfamily. RsmB/NOP family.

Its subcellular location is the cytoplasm. The catalysed reaction is cytidine(1407) in 16S rRNA + S-adenosyl-L-methionine = 5-methylcytidine(1407) in 16S rRNA + S-adenosyl-L-homocysteine + H(+). In terms of biological role, specifically methylates the cytosine at position 1407 (m5C1407) of 16S rRNA. This is Ribosomal RNA small subunit methyltransferase F from Salmonella schwarzengrund (strain CVM19633).